Consider the following 341-residue polypeptide: Anthranilate phosphoribosyltransferase (341 aa).

5-phospho-alpha-D-ribose 1-diphosphate contacts are provided by residues glycine 84, 94 to 97 (NVST), 112 to 120 (KHGGRAASS), and serine 124. Residue glycine 84 participates in anthranilate binding. Serine 96 provides a ligand contact to Mg(2+). Arginine 170 is a binding site for anthranilate. Mg(2+)-binding residues include aspartate 229 and glutamate 230.

This sequence belongs to the anthranilate phosphoribosyltransferase family. Homodimer. Mg(2+) serves as cofactor.

It carries out the reaction N-(5-phospho-beta-D-ribosyl)anthranilate + diphosphate = 5-phospho-alpha-D-ribose 1-diphosphate + anthranilate. It participates in amino-acid biosynthesis; L-tryptophan biosynthesis; L-tryptophan from chorismate: step 2/5. Catalyzes the transfer of the phosphoribosyl group of 5-phosphorylribose-1-pyrophosphate (PRPP) to anthranilate to yield N-(5'-phosphoribosyl)-anthranilate (PRA). The sequence is that of Anthranilate phosphoribosyltransferase from Methylobacillus flagellatus (strain ATCC 51484 / DSM 6875 / VKM B-1610 / KT).